Here is a 137-residue protein sequence, read N- to C-terminus: Putative pre-16S rRNA nuclease (137 aa).

This sequence belongs to the YqgF nuclease family.

It is found in the cytoplasm. Could be a nuclease involved in processing of the 5'-end of pre-16S rRNA. This chain is Putative pre-16S rRNA nuclease, found in Actinobacillus pleuropneumoniae serotype 5b (strain L20).